Consider the following 258-residue polypeptide: Pimeloyl-[acyl-carrier protein] methyl ester esterase (258 aa).

In terms of domain architecture, AB hydrolase-1 spans 16 to 242; that stretch reads LVLLHGWGLN…AAHAPFISHP (227 aa). Substrate-binding positions include tryptophan 22, 82 to 83, and 143 to 147; these read SM and FLALQ. Catalysis depends on serine 82, which acts as the Nucleophile. Active-site residues include aspartate 207 and histidine 235. Histidine 235 is a binding site for substrate.

Belongs to the AB hydrolase superfamily. Carboxylesterase BioH family. In terms of assembly, monomer.

It localises to the cytoplasm. It carries out the reaction 6-carboxyhexanoyl-[ACP] methyl ester + H2O = 6-carboxyhexanoyl-[ACP] + methanol + H(+). The protein operates within cofactor biosynthesis; biotin biosynthesis. Functionally, the physiological role of BioH is to remove the methyl group introduced by BioC when the pimeloyl moiety is complete. It allows to synthesize pimeloyl-ACP via the fatty acid synthetic pathway through the hydrolysis of the ester bonds of pimeloyl-ACP esters. This Yersinia pseudotuberculosis serotype IB (strain PB1/+) protein is Pimeloyl-[acyl-carrier protein] methyl ester esterase.